The sequence spans 73 residues: Translation initiation factor IF-1 (73 aa).

The 73-residue stretch at 1 to 73 folds into the S1-like domain; that stretch reads MAKKDGVIEI…TRGRIVYRYK (73 aa).

It belongs to the IF-1 family. As to quaternary structure, component of the 30S ribosomal translation pre-initiation complex which assembles on the 30S ribosome in the order IF-2 and IF-3, IF-1 and N-formylmethionyl-tRNA(fMet); mRNA recruitment can occur at any time during PIC assembly.

The protein localises to the cytoplasm. In terms of biological role, one of the essential components for the initiation of protein synthesis. Stabilizes the binding of IF-2 and IF-3 on the 30S subunit to which N-formylmethionyl-tRNA(fMet) subsequently binds. Helps modulate mRNA selection, yielding the 30S pre-initiation complex (PIC). Upon addition of the 50S ribosomal subunit IF-1, IF-2 and IF-3 are released leaving the mature 70S translation initiation complex. The polypeptide is Translation initiation factor IF-1 (Paenarthrobacter aurescens (strain TC1)).